We begin with the raw amino-acid sequence, 236 residues long: Chorionic somatomammotropin hormone (236 aa).

A signal peptide spans 1-36 (MAPASSHREHQWTCNLVRGSRLLLLLVVSNLILCQG). 3 disulfide bridges follow: Cys-44–Cys-51, Cys-97–Cys-212, and Cys-229–Cys-234.

This sequence belongs to the somatotropin/prolactin family.

It is found in the secreted. The polypeptide is Chorionic somatomammotropin hormone (CSH) (Ovis aries (Sheep)).